The chain runs to 743 residues: NAD(P)H-quinone oxidoreductase subunit 5, chloroplastic (743 aa).

The next 16 membrane-spanning stretches (helical) occupy residues 9–29 (WIIPFLPLPVPMLIGVGLLLF), 40–60 (WAFQSVLLLSIVMIFSMNLSI), 89–109 (IDPLTSIMSILITTVGILVLI), 125–145 (FAYMSFFSTSMLGLVTSSNLI), 147–167 (IYIFWELVGICSYLLIGFWFT), 185–205 (GDFGLLLGILGFYWITGSFEF), 219–239 (NEVNFLFVTLCAVLLFAGAIA), 258–278 (TPISALIHAATMVAAGIFLVA), 283–303 (LFIVIPHIMNFISLIGIITVF), 327–347 (LGYMMLALGMGSYRSALFHLI), 354–374 (ALLFLGSGSVIHSMETLVGYC), 396–416 (ISFLLGTLSLCGIPPLACFWS), 425–445 (WLYSPIFAIIAWSTAGLTAFY), 548–568 (LFPILILIIFTLFIGFLGIPF), 607–627 (VFSVSIASFGIFIAFFLYKPV), and 723–743 (YLFFYFSYVSICLLSYYFFNL).

Belongs to the complex I subunit 5 family. NDH is composed of at least 16 different subunits, 5 of which are encoded in the nucleus.

It is found in the plastid. The protein resides in the chloroplast thylakoid membrane. The catalysed reaction is a plastoquinone + NADH + (n+1) H(+)(in) = a plastoquinol + NAD(+) + n H(+)(out). The enzyme catalyses a plastoquinone + NADPH + (n+1) H(+)(in) = a plastoquinol + NADP(+) + n H(+)(out). Its function is as follows. NDH shuttles electrons from NAD(P)H:plastoquinone, via FMN and iron-sulfur (Fe-S) centers, to quinones in the photosynthetic chain and possibly in a chloroplast respiratory chain. The immediate electron acceptor for the enzyme in this species is believed to be plastoquinone. Couples the redox reaction to proton translocation, and thus conserves the redox energy in a proton gradient. The protein is NAD(P)H-quinone oxidoreductase subunit 5, chloroplastic (ndhF) of Carthamus tinctorius (Safflower).